Reading from the N-terminus, the 502-residue chain is Cardiolipin synthase (502 aa).

Helical transmembrane passes span 7 to 27 (VIIF…YWEG), 29 to 49 (LLGG…FVIS), and 59 to 79 (ITWL…YLMF). PLD phosphodiesterase domains lie at 237–264 (INFR…GDEY) and 415–442 (SKGF…DMRS). Residues histidine 242, lysine 244, aspartate 249, histidine 420, lysine 422, and aspartate 427 contribute to the active site.

This sequence belongs to the phospholipase D family. Cardiolipin synthase subfamily.

It is found in the cell membrane. It carries out the reaction 2 a 1,2-diacyl-sn-glycero-3-phospho-(1'-sn-glycerol) = a cardiolipin + glycerol. Functionally, catalyzes the reversible phosphatidyl group transfer from one phosphatidylglycerol molecule to another to form cardiolipin (CL) (diphosphatidylglycerol) and glycerol. The chain is Cardiolipin synthase (cls) from Geobacillus sp. (strain WCH70).